We begin with the raw amino-acid sequence, 332 residues long: Ribosomal RNA small subunit methyltransferase C (332 aa).

The protein belongs to the methyltransferase superfamily. RsmC family. Monomer.

The protein resides in the cytoplasm. It catalyses the reaction guanosine(1207) in 16S rRNA + S-adenosyl-L-methionine = N(2)-methylguanosine(1207) in 16S rRNA + S-adenosyl-L-homocysteine + H(+). Specifically methylates the guanine in position 1207 of 16S rRNA in the 30S particle. The sequence is that of Ribosomal RNA small subunit methyltransferase C from Pseudomonas syringae pv. syringae (strain B728a).